Reading from the N-terminus, the 712-residue chain is Glycine--tRNA ligase beta subunit (712 aa).

The protein belongs to the class-II aminoacyl-tRNA synthetase family. In terms of assembly, tetramer of two alpha and two beta subunits.

The protein localises to the cytoplasm. The catalysed reaction is tRNA(Gly) + glycine + ATP = glycyl-tRNA(Gly) + AMP + diphosphate. This Acaryochloris marina (strain MBIC 11017) protein is Glycine--tRNA ligase beta subunit.